Here is a 437-residue protein sequence, read N- to C-terminus: Enolase 2 (437 aa).

A Glycyl lysine isopeptide (Lys-Gly) (interchain with G-Cter in ubiquitin) cross-link involves residue Lys-60. Residue Ser-138 is modified to Phosphoserine. His-160 is a catalytic residue. Ser-188 is subject to Phosphoserine. A Glycyl lysine isopeptide (Lys-Gly) (interchain with G-Cter in ubiquitin) cross-link involves residue Lys-243. Mg(2+)-binding residues include Asp-247 and Glu-296. Position 313 is a phosphothreonine (Thr-313). Mg(2+) is bound at residue Asp-321. A Phosphothreonine modification is found at Thr-324. Residue Lys-358 forms a Glycyl lysine isopeptide (Lys-Gly) (interchain with G-Cter in ubiquitin) linkage.

This sequence belongs to the enolase family. Homodimer. Mg(2+) serves as cofactor.

It is found in the cytoplasm. It catalyses the reaction (2R)-2-phosphoglycerate = phosphoenolpyruvate + H2O. It functions in the pathway carbohydrate degradation; glycolysis; pyruvate from D-glyceraldehyde 3-phosphate: step 4/5. The polypeptide is Enolase 2 (ENO2) (Saccharomyces cerevisiae (strain ATCC 204508 / S288c) (Baker's yeast)).